Consider the following 268-residue polypeptide: Phosphate import ATP-binding protein PstB 3 (268 aa).

Positions 15 to 254 (LRTENLNVYY…DATESIFNNP (240 aa)) constitute an ABC transporter domain. Position 47-54 (47-54 (GPSGCGKS)) interacts with ATP.

It belongs to the ABC transporter superfamily. Phosphate importer (TC 3.A.1.7) family. As to quaternary structure, the complex is composed of two ATP-binding proteins (PstB), two transmembrane proteins (PstC and PstA) and a solute-binding protein (PstS).

It localises to the cell inner membrane. The enzyme catalyses phosphate(out) + ATP + H2O = ADP + 2 phosphate(in) + H(+). Functionally, part of the ABC transporter complex PstSACB involved in phosphate import. Responsible for energy coupling to the transport system. The sequence is that of Phosphate import ATP-binding protein PstB 3 from Nostoc sp. (strain PCC 7120 / SAG 25.82 / UTEX 2576).